Reading from the N-terminus, the 243-residue chain is Ribosomal RNA small subunit methyltransferase G (243 aa).

S-adenosyl-L-methionine-binding positions include Gly82, Phe87, Ala133–Glu134, and Arg152.

This sequence belongs to the methyltransferase superfamily. RNA methyltransferase RsmG family.

The protein resides in the cytoplasm. Specifically methylates the N7 position of a guanine in 16S rRNA. This chain is Ribosomal RNA small subunit methyltransferase G, found in Clostridium novyi (strain NT).